Here is a 400-residue protein sequence, read N- to C-terminus: Large envelope protein (400 aa).

Residue methionine 1 is modified to N-acetylmethionine. Glycine 2 is lipidated: N-myristoyl glycine; by host. Positions 2–119 (GAPLSTARRG…PPLRDTHPQA (118 aa)) are pre-S1. The pre-S stretch occupies residues 2–174 (GAPLSTARRG…FSKTGDPAMN (173 aa)). Topologically, residues 2–181 (GAPLSTARRG…AMNMENITSG (180 aa)) are virion surface; in external conformation. The Intravirion; in internal conformation segment spans residues 2 to 253 (GAPLSTARRG…PGYRWMCLRR (252 aa)). Proline 4 carries N-linked (GlcNAc...) asparagine glycosylation. The disordered stretch occupies residues 70 to 115 (PHGGLLGWSPQAQGILTTSPPDPPPASTNRRSGRKPTPVSPPLRDT). The span at 79 to 88 (PQAQGILTTS) shows a compositional bias: polar residues. The tract at residues 120–174 (MQWNSTQFHQALLDPRVRGLYFPAGGSSSETQNPAPTIASLTSSIFSKTGDPAMN) is pre-S2. The chain crosses the membrane as a helical span at residues 182–202 (LLRPLLVLQAVCFLLTKILTI). The Intravirion; in external conformation portion of the chain corresponds to 203 to 253 (PQSLDSWWTSLNFLGVPPGCPGQNSQSPISNHLPTSCPPTCPGYRWMCLRR). Residues 254–274 (FIIFLFILLLCLIFLLVLLDY) form a helical membrane-spanning segment. Residues 275–348 (QGMLPVCPLL…WASARFSWLS (74 aa)) lie on the Virion surface side of the membrane. The N-linked (GlcNAc...) asparagine; by host glycan is linked to asparagine 320. A helical membrane pass occupies residues 349–369 (LLVQFVQWCVGLSPTVWLLVI). The Intravirion segment spans residues 370–375 (WMIWYW). A helical membrane pass occupies residues 376-398 (GPNLCSILSPFIPLLPIFCYLWA). At 399–400 (SI) the chain is on the virion surface side.

This sequence belongs to the orthohepadnavirus major surface antigen family. In terms of assembly, in its internal form (Li-HBsAg), interacts with the capsid protein and with the isoform S. Interacts with host chaperone CANX. Associates with host chaperone CANX through its pre-S2 N glycan; this association may be essential for isoform M proper secretion. As to quaternary structure, interacts with isoform L. Interacts with the antigens of satellite virus HDV (HDVAgs); this interaction is required for encapsidation of HDV genomic RNA. Isoform M is N-terminally acetylated by host at a ratio of 90%, and N-glycosylated by host at the pre-S2 region. Post-translationally, myristoylated.

The protein resides in the virion membrane. Its function is as follows. The large envelope protein exists in two topological conformations, one which is termed 'external' or Le-HBsAg and the other 'internal' or Li-HBsAg. In its external conformation the protein attaches the virus to cell receptors and thereby initiating infection. This interaction determines the species specificity and liver tropism. This attachment induces virion internalization predominantly through caveolin-mediated endocytosis. The large envelope protein also assures fusion between virion membrane and endosomal membrane. In its internal conformation the protein plays a role in virion morphogenesis and mediates the contact with the nucleocapsid like a matrix protein. Functionally, the middle envelope protein plays an important role in the budding of the virion. It is involved in the induction of budding in a nucleocapsid independent way. In this process the majority of envelope proteins bud to form subviral lipoprotein particles of 22 nm of diameter that do not contain a nucleocapsid. The chain is Large envelope protein from Hepatitis B virus genotype H (isolate United States/LAS2523/2002) (HBV-H).